The following is a 556-amino-acid chain: Formate--tetrahydrofolate ligase (556 aa).

Position 65 to 72 (65 to 72) interacts with ATP; it reads TPAGEGKS.

Belongs to the formate--tetrahydrofolate ligase family.

The catalysed reaction is (6S)-5,6,7,8-tetrahydrofolate + formate + ATP = (6R)-10-formyltetrahydrofolate + ADP + phosphate. The protein operates within one-carbon metabolism; tetrahydrofolate interconversion. The sequence is that of Formate--tetrahydrofolate ligase from Streptococcus pneumoniae serotype 19F (strain G54).